The primary structure comprises 281 residues: Putative outer membrane protein BBA52 (281 aa).

The interval 162-281 (KRISDNQSKL…FFDSLEDQFI (120 aa)) is disordered. A compositionally biased stretch (polar residues) spans 179–196 (NKSVGSKFSKNSRPSKSP). The span at 219-249 (EFLDDPSQESDELEREYQDDELESEDPDDGE) shows a compositional bias: acidic residues. The span at 250–262 (REYQDDRESRDDT) shows a compositional bias: basic and acidic residues. Residues 263–281 (FNEDQSEDEFFDSLEDQFI) are compositionally biased toward acidic residues.

It is found in the cell outer membrane. The sequence is that of Putative outer membrane protein BBA52 from Borreliella burgdorferi (strain ATCC 35210 / DSM 4680 / CIP 102532 / B31) (Borrelia burgdorferi).